The chain runs to 605 residues: DNA primase (605 aa).

The segment at 38-62 (CPFHDEKTPSFTVSEDKQICHCFGC) adopts a CHC2-type zinc-finger fold. The region spanning 260 to 341 (DEIVLLEGFM…NVFVIQLPSG (82 aa)) is the Toprim domain. The Mg(2+) site is built by Glu266, Asp310, and Asp312.

The protein belongs to the DnaG primase family. In terms of assembly, monomer. Interacts with DnaB. Requires Zn(2+) as cofactor. The cofactor is Mg(2+).

It carries out the reaction ssDNA + n NTP = ssDNA/pppN(pN)n-1 hybrid + (n-1) diphosphate.. Functionally, RNA polymerase that catalyzes the synthesis of short RNA molecules used as primers for DNA polymerase during DNA replication. In Staphylococcus aureus (strain MSSA476), this protein is DNA primase.